A 488-amino-acid chain; its full sequence is Bifunctional protein NifU/MnmA (488 aa).

A nifU-like protein region spans residues 1–130; that stretch reads MPERYGPRVI…DYWSRQGDAL (130 aa). The tract at residues 143-488 is tRNA-specific 2-thiouridylase MnmA; the sequence is RRGVVAAMSG…GGGIIARRDA (346 aa). ATP contacts are provided by residues 149–156 and F175; that span reads AMSGGVDS. Residue C240 is the Nucleophile of the active site. Residues C240 and C333 are joined by a disulfide bond. G264 is a binding site for ATP. Positions 283 to 285 are interaction with tRNA; that stretch reads KDQ. Catalysis depends on C333, which acts as the Cysteine persulfide intermediate. The interval 433–434 is interaction with tRNA; that stretch reads RY.

This sequence in the N-terminal section; belongs to the NifU family. In the C-terminal section; belongs to the MnmA/TRMU family.

Its subcellular location is the cytoplasm. It catalyses the reaction S-sulfanyl-L-cysteinyl-[protein] + uridine(34) in tRNA + AH2 + ATP = 2-thiouridine(34) in tRNA + L-cysteinyl-[protein] + A + AMP + diphosphate + H(+). Functionally, may be involved in the formation or repair of [Fe-S] clusters present in iron-sulfur proteins. Catalyzes the 2-thiolation of uridine at the wobble position (U34) of tRNA, leading to the formation of s(2)U34. The chain is Bifunctional protein NifU/MnmA (nifU/mnmA) from Rubrobacter xylanophilus (strain DSM 9941 / JCM 11954 / NBRC 16129 / PRD-1).